We begin with the raw amino-acid sequence, 107 residues long: Translation initiation factor IF-1, chloroplastic (107 aa).

Residues 8-83 (REKKNPREAK…SKGRIIYRLP (76 aa)) form the S1-like domain.

This sequence belongs to the IF-1 family. Component of the 30S ribosomal translation pre-initiation complex which assembles on the 30S ribosome in the order IF-2 and IF-3, IF-1 and N-formylmethionyl-tRNA(fMet); mRNA recruitment can occur at any time during PIC assembly.

It localises to the plastid. Its subcellular location is the chloroplast. One of the essential components for the initiation of protein synthesis. Stabilizes the binding of IF-2 and IF-3 on the 30S subunit to which N-formylmethionyl-tRNA(fMet) subsequently binds. Helps modulate mRNA selection, yielding the 30S pre-initiation complex (PIC). Upon addition of the 50S ribosomal subunit IF-1, IF-2 and IF-3 are released leaving the mature 70S translation initiation complex. The polypeptide is Translation initiation factor IF-1, chloroplastic (Lolium perenne (Perennial ryegrass)).